Reading from the N-terminus, the 597-residue chain is Putative diflavin flavoprotein A 3 (597 aa).

Positions 59–254 are zinc metallo-hydrolase; that stretch reads QRGTTANSYL…YPAQTYAPSH (196 aa). Residues 283–421 form the Flavodoxin-like domain; it reads VALIYASAYG…MCEEAGTDFA (139 aa). The interval 449–597 is flavodoxin-reductase-like; the sequence is LGRLVGSLCV…VHHRKSGDHY (149 aa).

This sequence in the N-terminal section; belongs to the zinc metallo-hydrolase group 3 family. It in the C-terminal section; belongs to the flavodoxin reductase family. The cofactor is Fe cation.

Functionally, mediates electron transfer from NADH to oxygen, reducing it to water. This modular protein has 3 redox cofactors, in other organisms the same activity requires 2 or 3 proteins. This is Putative diflavin flavoprotein A 3 (dfa3) from Synechocystis sp. (strain ATCC 27184 / PCC 6803 / Kazusa).